The sequence spans 77 residues: Large ribosomal subunit protein bL28 (77 aa).

It belongs to the bacterial ribosomal protein bL28 family.

The polypeptide is Large ribosomal subunit protein bL28 (Polynucleobacter asymbioticus (strain DSM 18221 / CIP 109841 / QLW-P1DMWA-1) (Polynucleobacter necessarius subsp. asymbioticus)).